A 217-amino-acid chain; its full sequence is Probable GTP-binding protein EngB (217 aa).

Residues 44–217 (DRVEVCFAGR…TLRSIIAHLE (174 aa)) enclose the EngB-type G domain. GTP is bound by residues 52–59 (GRSNVGKS), 79–83 (GRTQE), 97–100 (DLPG), 164–167 (TKAD), and 198–200 (TSS). Mg(2+) is bound by residues S59 and T81.

The protein belongs to the TRAFAC class TrmE-Era-EngA-EngB-Septin-like GTPase superfamily. EngB GTPase family. Requires Mg(2+) as cofactor.

Its function is as follows. Necessary for normal cell division and for the maintenance of normal septation. This chain is Probable GTP-binding protein EngB, found in Ruegeria pomeroyi (strain ATCC 700808 / DSM 15171 / DSS-3) (Silicibacter pomeroyi).